A 39-amino-acid polypeptide reads, in one-letter code: MTMDRTSPIFTVRWLAVHGLAVPTVFFLGSISAMQFIQR.

The chain crosses the membrane as a helical span at residues 14–30 (WLAVHGLAVPTVFFLGS). Position 18 (H18) interacts with heme.

It belongs to the PsbE/PsbF family. In terms of assembly, heterodimer of an alpha subunit and a beta subunit. PSII is composed of 1 copy each of membrane proteins PsbA, PsbB, PsbC, PsbD, PsbE, PsbF, PsbH, PsbI, PsbJ, PsbK, PsbL, PsbM, PsbT, PsbX, PsbY, PsbZ, Psb30/Ycf12, at least 3 peripheral proteins of the oxygen-evolving complex and a large number of cofactors. It forms dimeric complexes. Heme b serves as cofactor.

The protein localises to the plastid membrane. In terms of biological role, this b-type cytochrome is tightly associated with the reaction center of photosystem II (PSII). PSII is a light-driven water:plastoquinone oxidoreductase that uses light energy to abstract electrons from H(2)O, generating O(2) and a proton gradient subsequently used for ATP formation. It consists of a core antenna complex that captures photons, and an electron transfer chain that converts photonic excitation into a charge separation. This is Cytochrome b559 subunit beta from Cuscuta europaea (European dodder).